Consider the following 1390-residue polypeptide: DNA-directed RNA polymerase subunit beta (1390 aa).

It belongs to the RNA polymerase beta chain family. As to quaternary structure, the RNAP catalytic core consists of 2 alpha, 1 beta, 1 beta' and 1 omega subunit. When a sigma factor is associated with the core the holoenzyme is formed, which can initiate transcription.

The catalysed reaction is RNA(n) + a ribonucleoside 5'-triphosphate = RNA(n+1) + diphosphate. Functionally, DNA-dependent RNA polymerase catalyzes the transcription of DNA into RNA using the four ribonucleoside triphosphates as substrates. This is DNA-directed RNA polymerase subunit beta from Methylobacillus flagellatus (strain ATCC 51484 / DSM 6875 / VKM B-1610 / KT).